Here is a 189-residue protein sequence, read N- to C-terminus: Ras-like protein rasG (189 aa).

10 to 17 is a binding site for GTP; that stretch reads GGGGVGKS. The Effector region motif lies at 32 to 40; the sequence is YDPTIEDSY. GTP contacts are provided by residues 57-61 and 116-119; these read DTAGQ and NKCD. The interval 169–189 is disordered; the sequence is KGDSKPEKGKKKRPLKACTLL. The residue at position 186 (cysteine 186) is a Cysteine methyl ester. Cysteine 186 carries S-geranylgeranyl cysteine lipidation. The propeptide at 187 to 189 is removed in mature form; it reads TLL.

This sequence belongs to the small GTPase superfamily. Ras family. Interacts with ripA.

Its subcellular location is the cell membrane. The catalysed reaction is GTP + H2O = GDP + phosphate + H(+). Its activity is regulated as follows. Alternates between an inactive form bound to GDP and an active form bound to GTP. Activated by a guanine nucleotide-exchange factor (GEF) and inactivated by a GTPase-activating protein (GAP). Ras proteins bind GDP/GTP and possess intrinsic GTPase activity. This chain is Ras-like protein rasG (rasG), found in Dictyostelium discoideum (Social amoeba).